A 378-amino-acid chain; its full sequence is Manganese peroxidase 1 (378 aa).

Residues 1–21 form the signal peptide; it reads MAFKSLIAFVALAAAVRAAPT. 5 disulfide bridges follow: Cys24–Cys36, Cys35–Cys310, Cys54–Cys138, Cys274–Cys340, and Cys362–Cys369. Positions 56 and 60 each coordinate Mn(2+). Catalysis depends on His67, which acts as the Proton acceptor. Ca(2+)-binding residues include Asp68, Gly83, Asp85, and Ser87. N-linked (GlcNAc...) asparagine glycosylation is found at Asn97 and Asn152. His194 is a binding site for heme b. Position 195 (Ser195) interacts with Ca(2+). A Mn(2+)-binding site is contributed by Asp200. Asp212, Thr214, Thr217, and Asp219 together coordinate Ca(2+). N-linked (GlcNAc...) asparagine glycosylation is present at Asn238.

The protein belongs to the peroxidase family. Ligninase subfamily. Requires Ca(2+) as cofactor. Heme b is required as a cofactor.

It localises to the secreted. It carries out the reaction 2 Mn(2+) + H2O2 + 2 H(+) = 2 Mn(3+) + 2 H2O. Functionally, catalyzes the oxidation of Mn(2+) to Mn(3+). The latter, acting as a diffusible redox mediator, is capable of oxidizing a variety of lignin compounds. This chain is Manganese peroxidase 1 (MNP1), found in Phanerodontia chrysosporium (White-rot fungus).